The following is an 817-amino-acid chain: Leucine--tRNA ligase (817 aa).

The 'HIGH' region motif lies at P40–H50. A 'KMSKS' region motif is present at residues K578–S582. Residue K581 participates in ATP binding.

It belongs to the class-I aminoacyl-tRNA synthetase family.

It localises to the cytoplasm. The catalysed reaction is tRNA(Leu) + L-leucine + ATP = L-leucyl-tRNA(Leu) + AMP + diphosphate. This chain is Leucine--tRNA ligase, found in Caldicellulosiruptor saccharolyticus (strain ATCC 43494 / DSM 8903 / Tp8T 6331).